The following is a 1493-amino-acid chain: Mediator of RNA polymerase II transcription subunit 14 (1493 aa).

Disordered stretches follow at residues 1–51 (MPSS…YHAA), 71–110 (MIGV…SAKG), 408–427 (TEQG…APTV), 674–693 (QRPR…RSAS), 894–913 (EAGT…NDVD), and 957–997 (GSNT…SSDD). The span at 90-100 (PDSKQSSDADG) shows a compositional bias: basic and acidic residues.

Belongs to the Mediator complex subunit 14 family. As to quaternary structure, component of the Mediator complex.

It is found in the nucleus. In terms of biological role, component of the Mediator complex, a coactivator involved in the regulated transcription of nearly all RNA polymerase II-dependent genes. Mediator functions as a bridge to convey information from gene-specific regulatory proteins to the basal RNA polymerase II transcription machinery. Mediator is recruited to promoters by direct interactions with regulatory proteins and serves as a scaffold for the assembly of a functional preinitiation complex with RNA polymerase II and the general transcription factors. The polypeptide is Mediator of RNA polymerase II transcription subunit 14 (RGR1) (Mycosarcoma maydis (Corn smut fungus)).